Consider the following 290-residue polypeptide: Hydroxyacylglutathione hydrolase-like protein (290 aa).

Positions 54, 56, 58, 59, 110, 134, and 172 each coordinate Zn(2+).

Belongs to the metallo-beta-lactamase superfamily. Glyoxalase II family. Requires Zn(2+) as cofactor.

In terms of biological role, hydrolase acting on ester bonds. This chain is Hydroxyacylglutathione hydrolase-like protein (HAGHL), found in Homo sapiens (Human).